Reading from the N-terminus, the 353-residue chain is Endophilin-A3 (353 aa).

Residues 1–21 (MSVAGLKKQFHKASQLFSEKI) are membrane-binding amphipathic helix. One can recognise a BAR domain in the interval 18–249 (SEKISGAEGT…LQNRINVASS (232 aa)). The required for dimerization upon membrane association stretch occupies residues 60-87 (PNPAYRAKLGMLNTMSKIRGQVKTTGYP). Residues 180-201 (DEEVKQAVEKFEESKELAERSM) are a coiled coil. The interval 218-254 (FVEAALDYHKQSTEILEDLQSKLQNRINVASSRPKRE) is interaction with ARC. Residues 291-350 (VDQPCCQALYDFEPENEGELGFKEGDIITLTNQIDENWYEGMLNGESGFFPHNYVEVMVP) form the SH3 domain.

This sequence belongs to the endophilin family. In terms of assembly, interacts with ARC. Interacts with SYNJ1 and DNM1. As to expression, highest level in a region associated with endocytosis of yolk proteins in developing oocytes (at protein level). Highest level in small ovarian follicles. High levels in brain and testis. Lower level in adrenal glands.

It localises to the cytoplasm. Its subcellular location is the early endosome membrane. In terms of biological role, implicated in endocytosis. May recruit other proteins to membranes with high curvature. Implicated in endocytosis of yolk proteins during oogenesis. The chain is Endophilin-A3 from Gallus gallus (Chicken).